Consider the following 309-residue polypeptide: MEKVLVFGHKNPDTDAICSAIAYAELKKELGMNAEPVRLGEISGETQFALNYFKVEGPRFVETVANEVDNVILVDHNERQQSANDIESVRVLEVIDHHRIANFETSDPIYYRCEPVGCTATILNKMYKENGVTIRKEVAGLMLSAIISDSLLFKSPTCTEQDVAAARELAEIAGVDADKYGLEMLKAGADLSGKTMEQLISLDAKEFQMGNAKVEIAQVNAVDTNDVLVHQAELEKVISAVVEEKGLDLFLFVVTDILTNDSVGLAIGKAANIVEKAYNVSLENNTATLKGVVSRKKQIVPVLTEAFQA.

Residues His-9, Asp-13, Asp-15, Asp-75, His-97, and Asp-149 each contribute to the Mn(2+) site.

The protein belongs to the PPase class C family. Mn(2+) serves as cofactor.

It is found in the cytoplasm. It carries out the reaction diphosphate + H2O = 2 phosphate + H(+). The protein is Probable manganese-dependent inorganic pyrophosphatase of Bacillus cereus (strain ZK / E33L).